Here is a 202-residue protein sequence, read N- to C-terminus: Matrix protein (202 aa).

A PPXY motif motif is present at residues 35-38; sequence PPEY. The segment at 115–151 is essential for glycoprotein binding; sequence KLRRTLIFQWADSRGPLEGEELEYSQEITWDDDTEFV.

This sequence belongs to the lyssavirus matrix protein family. As to quaternary structure, homomultimer. Interacts with nucleoprotein and with the cytoplasmic domain of glycoprotein. Interacts with host ATP6V1A; this interaction plays an important role in virion uncoating after viral entry.

Its subcellular location is the virion membrane. It localises to the host endomembrane system. The protein resides in the host cytoplasm. Its function is as follows. Plays a major role in assembly, budding and uncoating of virion after membrane fusion. Completely covers the ribonucleoprotein coil and keep it in condensed bullet-shaped form. Inhibits viral transcription and stimulates replication. Plays a major role in early induction of TRAIL-mediated apoptosis in infected neurons. Inhibits the integrated stress response (ISR) in the infected cell by blocking the formation of stress granules. This chain is Matrix protein (M), found in Rabies virus (strain CVS-11) (RABV).